The primary structure comprises 897 residues: Alanine--tRNA ligase (897 aa).

Zn(2+) contacts are provided by His581, His585, Cys684, and His688.

The protein belongs to the class-II aminoacyl-tRNA synthetase family. Zn(2+) serves as cofactor.

It is found in the cytoplasm. The enzyme catalyses tRNA(Ala) + L-alanine + ATP = L-alanyl-tRNA(Ala) + AMP + diphosphate. Catalyzes the attachment of alanine to tRNA(Ala) in a two-step reaction: alanine is first activated by ATP to form Ala-AMP and then transferred to the acceptor end of tRNA(Ala). Also edits incorrectly charged Ser-tRNA(Ala) and Gly-tRNA(Ala) via its editing domain. The sequence is that of Alanine--tRNA ligase from Mycobacterium sp. (strain KMS).